The following is a 177-amino-acid chain: Large ribosomal subunit protein bL9 (177 aa).

It belongs to the bacterial ribosomal protein bL9 family.

In terms of biological role, binds to the 23S rRNA. The protein is Large ribosomal subunit protein bL9 of Rhodopirellula baltica (strain DSM 10527 / NCIMB 13988 / SH1).